The chain runs to 275 residues: 2,3,4,5-tetrahydropyridine-2,6-dicarboxylate N-succinyltransferase (275 aa).

Substrate is bound by residues Arg-106 and Asp-143.

Belongs to the transferase hexapeptide repeat family. Homotrimer.

The protein localises to the cytoplasm. The catalysed reaction is (S)-2,3,4,5-tetrahydrodipicolinate + succinyl-CoA + H2O = (S)-2-succinylamino-6-oxoheptanedioate + CoA. It participates in amino-acid biosynthesis; L-lysine biosynthesis via DAP pathway; LL-2,6-diaminopimelate from (S)-tetrahydrodipicolinate (succinylase route): step 1/3. In Cupriavidus necator (strain ATCC 17699 / DSM 428 / KCTC 22496 / NCIMB 10442 / H16 / Stanier 337) (Ralstonia eutropha), this protein is 2,3,4,5-tetrahydropyridine-2,6-dicarboxylate N-succinyltransferase.